Reading from the N-terminus, the 606-residue chain is Elongation factor 4 (606 aa).

In terms of domain architecture, tr-type G spans 11–193 (PHIRNFSIIA…RLVRDVPPPK (183 aa)). Residues 23–28 (DHGKST) and 140–143 (NKMD) each bind GTP.

The protein belongs to the TRAFAC class translation factor GTPase superfamily. Classic translation factor GTPase family. LepA subfamily.

It is found in the cell inner membrane. The catalysed reaction is GTP + H2O = GDP + phosphate + H(+). Its function is as follows. Required for accurate and efficient protein synthesis under certain stress conditions. May act as a fidelity factor of the translation reaction, by catalyzing a one-codon backward translocation of tRNAs on improperly translocated ribosomes. Back-translocation proceeds from a post-translocation (POST) complex to a pre-translocation (PRE) complex, thus giving elongation factor G a second chance to translocate the tRNAs correctly. Binds to ribosomes in a GTP-dependent manner. This chain is Elongation factor 4, found in Chromohalobacter salexigens (strain ATCC BAA-138 / DSM 3043 / CIP 106854 / NCIMB 13768 / 1H11).